Consider the following 225-residue polypeptide: uncharacterized protein (225 aa).

The region spanning 114–219 (DAEAIIMQVY…RLSVTMRRII (106 aa)) is the Fe2OG dioxygenase domain.

It belongs to the iron/ascorbate-dependent oxidoreductase family.

It localises to the cytoplasm. The protein localises to the nucleus. This is an uncharacterized protein from Schizosaccharomyces pombe (strain 972 / ATCC 24843) (Fission yeast).